Reading from the N-terminus, the 688-residue chain is G protein-coupled receptor kinase 3 (688 aa).

An N-terminal region spans residues 1–190; sequence MADLEAVLAD…ELNIHLSMND (190 aa). The RGS domain occupies 54–175; sequence TFDKIFNQKI…MESDKFTRFC (122 aa). In terms of domain architecture, Protein kinase spans 191 to 453; it reads FSVHRIIGRG…ARELKEHIFF (263 aa). Residues 197–205 and lysine 220 each bind ATP; that span reads IGRGGFGEV. Residue aspartate 317 is the Proton acceptor of the active site. The 68-residue stretch at 454 to 521 folds into the AGC-kinase C-terminal domain; sequence KGIDWQHVYL…VISERWQQEV (68 aa). The region spanning 558 to 652 is the PH domain; the sequence is DCIMHGYMLK…WLKELTCTFN (95 aa).

Belongs to the protein kinase superfamily. AGC Ser/Thr protein kinase family. GPRK subfamily. As to quaternary structure, interacts with GIT1. Post-translationally, ubiquitinated.

Its subcellular location is the postsynapse. The protein localises to the presynapse. The catalysed reaction is [beta-adrenergic receptor] + ATP = [beta-adrenergic receptor]-phosphate + ADP + H(+). Specifically phosphorylates the agonist-occupied form of the beta-adrenergic and closely related receptors. This chain is G protein-coupled receptor kinase 3, found in Mus musculus (Mouse).